The primary structure comprises 318 residues: Zinc chaperone YjiA (318 aa).

11–19 (GFLGAGKTT) contributes to the GTP binding site. Glu-37, Glu-42, Cys-66, Glu-74, and His-114 together coordinate Zn(2+). The short motif at 64 to 67 (CICC) is the CXCC motif element. Position 161 (Asp-161) interacts with GTP. Glu-167, His-170, and His-187 together coordinate Zn(2+). Positions 224-315 (ISSIVVELDY…EEEIRAAFAG (92 aa)) constitute a CobW C-terminal domain.

This sequence belongs to the SIMIBI class G3E GTPase family. ZNG1 subfamily. In terms of assembly, monomer in the apo form. Metal binding induces oligomerization. Forms homodimers and higher oligomers.

The catalysed reaction is GTP + H2O = GDP + phosphate + H(+). GTPase activity is inhibited by metal binding. Activity is decreased in the presence of Co(II) or Ni(II), and is completely inhibited in the presence of Zn(II). In terms of biological role, zinc chaperone that directly transfers zinc cofactor to target proteins, thereby activating them. Zinc is transferred from the CXCC motif in the GTPase domain to the zinc binding site in target proteins in a process requiring GTP hydrolysis. In Escherichia coli (strain K12), this protein is Zinc chaperone YjiA (yjiA).